The primary structure comprises 332 residues: Probable allantoicase (332 aa).

It belongs to the allantoicase family.

It catalyses the reaction allantoate + H2O = (S)-ureidoglycolate + urea. Its pathway is nitrogen metabolism; (S)-allantoin degradation; (S)-ureidoglycolate from allantoate (aminidohydrolase route): step 1/1. The protein is Probable allantoicase of Pseudomonas paraeruginosa (strain DSM 24068 / PA7) (Pseudomonas aeruginosa (strain PA7)).